A 257-amino-acid chain; its full sequence is Achaete-scute complex protein T3 (257 aa).

The bHLH domain occupies 83 to 145 (PSVARRNARE…RIAVEYIRGL (63 aa)). Residues 161–221 (YNSADESSND…SEISGGGYIK (61 aa)) are disordered. Composition is skewed to low complexity over residues 165–184 (DESS…LDSS) and 193–213 (QSAQ…SGSE).

In terms of assembly, efficient DNA binding requires dimerization with another bHLH protein. L(1)SC, SC and AC strongly label the presumptive stomatogastric nervous system, while ASE is more prominent in the presumptive procephalic lobe.

Functionally, AS-C proteins are involved in the determination of the neuronal precursors in the peripheral nervous system and the central nervous system. The protein is Achaete-scute complex protein T3 (l(1)sc) of Drosophila melanogaster (Fruit fly).